Reading from the N-terminus, the 337-residue chain is ATP-dependent 6-phosphofructokinase (337 aa).

Gly-11 is a binding site for ATP. Residue 21–25 (RAVVR) participates in ADP binding. Residues 72-73 (RY) and 102-105 (GDGS) contribute to the ATP site. Asp-103 contacts Mg(2+). Residue 125-127 (TID) coordinates substrate. Asp-127 functions as the Proton acceptor in the catalytic mechanism. ADP is bound at residue Arg-154. Substrate-binding positions include Arg-162 and 169–171 (MGR). ADP is bound by residues 185-187 (GAD), Lys-212, and 214-216 (KNH). Substrate-binding positions include Glu-223, Arg-245, and 251 to 254 (HILR).

The protein belongs to the phosphofructokinase type A (PFKA) family. ATP-dependent PFK group I subfamily. Prokaryotic clade 'B1' sub-subfamily. Homotetramer. Mg(2+) serves as cofactor.

Its subcellular location is the cytoplasm. It carries out the reaction beta-D-fructose 6-phosphate + ATP = beta-D-fructose 1,6-bisphosphate + ADP + H(+). It functions in the pathway carbohydrate degradation; glycolysis; D-glyceraldehyde 3-phosphate and glycerone phosphate from D-glucose: step 3/4. Its activity is regulated as follows. Allosterically activated by ADP and other diphosphonucleosides, and allosterically inhibited by phosphoenolpyruvate. Functionally, catalyzes the phosphorylation of D-fructose 6-phosphate to fructose 1,6-bisphosphate by ATP, the first committing step of glycolysis. The protein is ATP-dependent 6-phosphofructokinase of Streptococcus pyogenes serotype M28 (strain MGAS6180).